Reading from the N-terminus, the 442-residue chain is MYLPQEIIRKKRDGEALTADEINFFIQGVANNTVSEGQIAAFAMTIFFNEMTMPERIALTCAMRDSGMVIDWSHMNFGGPIVDKHSTGGVGDVTSLMLGPMVAACGGFVPMISGRGLGHTGGTLDKLEAIPGYNITPSNDVFGQVTKEAGVAIIGQTGDLAPADKRVYATRDITATVDNISLITASILSKKLAAGLESLVMDVKVGSGAFMPTYEASEELAKSIVAVANGAGTKTTAILTDMNQVLASSAGNAVEVREAVRFLKGEYRNPRLLEVTMASCAEMLVLGKLAENTEDARAKLMEVLDNGKAAECFGKMVAGLGGPVDFMDNYDNYLDKAEIIKPVYAKETGVVSAMDTRAIGMAVVAMGGGRRVATDSIDYAVGFDQFIRLGEIASSEKPLAMIHARNEAQWQEAANALQAAIKVGGEYTPTPDVYRQIRQEDI.

The protein belongs to the thymidine/pyrimidine-nucleoside phosphorylase family. In terms of assembly, homodimer.

It carries out the reaction thymidine + phosphate = 2-deoxy-alpha-D-ribose 1-phosphate + thymine. The protein operates within pyrimidine metabolism; dTMP biosynthesis via salvage pathway; dTMP from thymine: step 1/2. Its function is as follows. The enzymes which catalyze the reversible phosphorolysis of pyrimidine nucleosides are involved in the degradation of these compounds and in their utilization as carbon and energy sources, or in the rescue of pyrimidine bases for nucleotide synthesis. The polypeptide is Thymidine phosphorylase (Vibrio vulnificus (strain CMCP6)).